We begin with the raw amino-acid sequence, 191 residues long: Probable nicotinate-nucleotide adenylyltransferase (191 aa).

It belongs to the NadD family.

The catalysed reaction is nicotinate beta-D-ribonucleotide + ATP + H(+) = deamido-NAD(+) + diphosphate. It participates in cofactor biosynthesis; NAD(+) biosynthesis; deamido-NAD(+) from nicotinate D-ribonucleotide: step 1/1. Its function is as follows. Catalyzes the reversible adenylation of nicotinate mononucleotide (NaMN) to nicotinic acid adenine dinucleotide (NaAD). In Staphylococcus epidermidis (strain ATCC 12228 / FDA PCI 1200), this protein is Probable nicotinate-nucleotide adenylyltransferase.